The chain runs to 525 residues: ATP synthase subunit alpha (525 aa).

171 to 178 contributes to the ATP binding site; sequence GDRQTGKS.

It belongs to the ATPase alpha/beta chains family. In terms of assembly, F-type ATPases have 2 components, CF(1) - the catalytic core - and CF(0) - the membrane proton channel. CF(1) has five subunits: alpha(3), beta(3), gamma(1), delta(1), epsilon(1). CF(0) has three main subunits: a(1), b(2) and c(9-12). The alpha and beta chains form an alternating ring which encloses part of the gamma chain. CF(1) is attached to CF(0) by a central stalk formed by the gamma and epsilon chains, while a peripheral stalk is formed by the delta and b chains.

The protein localises to the cell inner membrane. It carries out the reaction ATP + H2O + 4 H(+)(in) = ADP + phosphate + 5 H(+)(out). Produces ATP from ADP in the presence of a proton gradient across the membrane. The alpha chain is a regulatory subunit. In Flavobacterium johnsoniae (strain ATCC 17061 / DSM 2064 / JCM 8514 / BCRC 14874 / CCUG 350202 / NBRC 14942 / NCIMB 11054 / UW101) (Cytophaga johnsonae), this protein is ATP synthase subunit alpha.